A 329-amino-acid chain; its full sequence is NADH-quinone oxidoreductase subunit H (329 aa).

Transmembrane regions (helical) follow at residues 11-31 (IVVA…CGAL), 81-101 (LIFT…FAVV), 114-134 (IGLL…LFAG), 154-174 (ISYE…TGSF), 187-207 (TWFI…GVAV), 238-258 (FFVG…TLFF), 270-290 (QLSF…FILL), and 309-329 (FCLP…LAAQ).

Belongs to the complex I subunit 1 family. NDH-1 is composed of 13 different subunits. Subunits NuoA, H, J, K, L, M, N constitute the membrane sector of the complex.

Its subcellular location is the cell inner membrane. It carries out the reaction a quinone + NADH + 5 H(+)(in) = a quinol + NAD(+) + 4 H(+)(out). Functionally, NDH-1 shuttles electrons from NADH, via FMN and iron-sulfur (Fe-S) centers, to quinones in the respiratory chain. The immediate electron acceptor for the enzyme in this species is believed to be ubiquinone. Couples the redox reaction to proton translocation (for every two electrons transferred, four hydrogen ions are translocated across the cytoplasmic membrane), and thus conserves the redox energy in a proton gradient. This subunit may bind ubiquinone. This Azotobacter vinelandii (strain DJ / ATCC BAA-1303) protein is NADH-quinone oxidoreductase subunit H.